Here is a 38-residue protein sequence, read N- to C-terminus: Photosystem II reaction center protein L (38 aa).

A helical membrane pass occupies residues 17–37 (SLFWGLLLIFVLAVLFSNYFF).

Belongs to the PsbL family. In terms of assembly, PSII is composed of 1 copy each of membrane proteins PsbA, PsbB, PsbC, PsbD, PsbE, PsbF, PsbH, PsbI, PsbJ, PsbK, PsbL, PsbM, PsbT, PsbX, PsbY, PsbZ, Psb30/Ycf12, at least 3 peripheral proteins of the oxygen-evolving complex and a large number of cofactors. It forms dimeric complexes.

It is found in the plastid. The protein localises to the chloroplast thylakoid membrane. Its function is as follows. One of the components of the core complex of photosystem II (PSII). PSII is a light-driven water:plastoquinone oxidoreductase that uses light energy to abstract electrons from H(2)O, generating O(2) and a proton gradient subsequently used for ATP formation. It consists of a core antenna complex that captures photons, and an electron transfer chain that converts photonic excitation into a charge separation. This subunit is found at the monomer-monomer interface and is required for correct PSII assembly and/or dimerization. In Chaetosphaeridium globosum (Charophycean green alga), this protein is Photosystem II reaction center protein L.